The sequence spans 197 residues: Large ribosomal subunit protein bL25 (197 aa).

This sequence belongs to the bacterial ribosomal protein bL25 family. CTC subfamily. In terms of assembly, part of the 50S ribosomal subunit; part of the 5S rRNA/L5/L18/L25 subcomplex. Contacts the 5S rRNA. Binds to the 5S rRNA independently of L5 and L18.

Functionally, this is one of the proteins that binds to the 5S RNA in the ribosome where it forms part of the central protuberance. The chain is Large ribosomal subunit protein bL25 from Caulobacter vibrioides (strain ATCC 19089 / CIP 103742 / CB 15) (Caulobacter crescentus).